The following is a 262-amino-acid chain: Phosphate import ATP-binding protein PstB (262 aa).

Residues 16-257 (IDVRNLNFYY…PHRKETEDYI (242 aa)) form the ABC transporter domain. 48–55 (GPSGCGKS) lines the ATP pocket.

This sequence belongs to the ABC transporter superfamily. Phosphate importer (TC 3.A.1.7) family. As to quaternary structure, the complex is composed of two ATP-binding proteins (PstB), two transmembrane proteins (PstC and PstA) and a solute-binding protein (PstS).

The protein resides in the cell inner membrane. The catalysed reaction is phosphate(out) + ATP + H2O = ADP + 2 phosphate(in) + H(+). In terms of biological role, part of the ABC transporter complex PstSACB involved in phosphate import. Responsible for energy coupling to the transport system. The protein is Phosphate import ATP-binding protein PstB of Cupriavidus metallidurans (strain ATCC 43123 / DSM 2839 / NBRC 102507 / CH34) (Ralstonia metallidurans).